We begin with the raw amino-acid sequence, 960 residues long: Dynamin-like GTPase OPA1, mitochondrial (960 aa).

The N-terminal 87 residues, M1–N87, are a transit peptide targeting the mitochondrion. The Mitochondrial matrix portion of the chain corresponds to F88–R96. A helical membrane pass occupies residues L97 to Y113. At T114–D770 the chain is on the mitochondrial intermembrane side. Short sequence motifs (LQQQIQ motif) lie at residues D181–G186 and Q217–L222. Residues S210 to G254 are a coiled coil. K228 is modified (N6-acetyllysine). The short motif at R235–N240 is the LQQQIQ motif element. The 277-residue stretch at Q285–E561 folds into the Dynamin-type G domain. A G1 motif region spans residues G295–T302. GTP-binding residues include S298, G300, K301, T302, S303, and G317. T302 lines the Mg(2+) pocket. The segment at M321–R324 is G2 motif. T323 and D398 together coordinate Mg(2+). The interval D398–G401 is G3 motif. Residues T467–D470 form a G4 motif region. GTP is bound by residues K468, D470, T503, G506, and N507. Positions V501–G504 are G5 motif. Stalk region stretches follow at residues D589–T836 and C874–L928. The interval S736–C856 is paddle region. An intramembrane segment occupies W771 to R781. Residues T782–K960 are Mitochondrial intermembrane-facing. A disulfide bridge links C856 with C874. A coiled-coil region spans residues R895–K960.

This sequence belongs to the TRAFAC class dynamin-like GTPase superfamily. Dynamin/Fzo/YdjA family. As to quaternary structure, oligomeric complex consisting of membrane-bound and soluble forms of OPA1. Interacts with RCC1L; RCC1L acts as a guanine nucleotide exchange factor (GEF) for OPA1 by exchanging bound GDP for free GTP. Interacts with CHCHD3 and IMMT; these interactions occur preferentially with soluble OPA1 forms. Interacts with PRELID1. In terms of processing, cleaved by OMA1 or YME1L downstream of the transmembrane region in response to different signals to generate soluble forms. Cleaved by OMA1 at position S1 following stress conditions, generating the short soluble form (Dynamin-like GTPase OPA1, short form; S-OPA1). AFG3L2 is involved in the regulation of OMA1-dependent processing of OPA1. PARL-dependent proteolytic processing releases an antiapoptotic soluble form not required for mitochondrial fusion. Cleavage at position S2 by YME1L is required to mediate oxidative phosphorylation (OXPHOS)-induced mitochondrial fusion. Cleavage occurs in the sequence motif Leu-Gln-Gln-Gln-Ile-Gln (LQQQIQ). Post-translationally, cleavage at position S2 by YME1L is required to mediate oxidative phosphorylation (OXPHOS)-induced mitochondrial fusion. Cleavage occurs in the sequence motif Leu-Gln-Gln-Gln-Ile-Gln (LQQQIQ). Cleavage at position S3 by YME1L is required for membrane tubulation. In terms of processing, cleavage at position S3 by YME1L is required for membrane tubulation. In terms of tissue distribution, highly expressed in retina. Also expressed in brain, testis, heart and skeletal muscle. Low levels of all isoforms expressed in a variety of tissues. Expressed in retina, skeletal muscle, heart, lung, ovary, colon, thyroid gland, leukocytes and fetal brain. Low levels of all isoforms expressed in a variety of tissues. As to expression, isoform 2 expressed in colon, liver, kidney, thyroid gland and leukocytes.

It is found in the mitochondrion inner membrane. The protein resides in the mitochondrion intermembrane space. It catalyses the reaction GTP + H2O = GDP + phosphate + H(+). Its activity is regulated as follows. Activated by guanine nucleotide exchange factor RCC1L. Functionally, dynamin-related GTPase that is essential for normal mitochondrial morphology by mediating fusion of the mitochondrial inner membranes, regulating cristae morphology and maintaining respiratory chain function. Exists in two forms: the transmembrane, long form (Dynamin-like GTPase OPA1, long form; L-OPA1), which is tethered to the inner mitochondrial membrane, and the short soluble form (Dynamin-like GTPase OPA1, short form; S-OPA1), which results from proteolytic cleavage and localizes in the intermembrane space. Both forms (L-OPA1 and S-OPA1) cooperate to catalyze the fusion of the mitochondrial inner membrane. The equilibrium between L-OPA1 and S-OPA1 is essential: excess levels of S-OPA1, produced by cleavage by OMA1 following loss of mitochondrial membrane potential, lead to an impaired equilibrium between L-OPA1 and S-OPA1, inhibiting mitochondrial fusion. The balance between L-OPA1 and S-OPA1 also influences cristae shape and morphology. Involved in remodeling cristae and the release of cytochrome c during apoptosis. Proteolytic processing by PARL in response to intrinsic apoptotic signals may lead to disassembly of OPA1 oligomers and release of the caspase activator cytochrome C (CYCS) into the mitochondrial intermembrane space. Acts as a regulator of T-helper Th17 cells, which are characterized by cells with fused mitochondria with tight cristae, by mediating mitochondrial membrane remodeling: OPA1 is required for interleukin-17 (IL-17) production. Its role in mitochondrial morphology is required for mitochondrial genome maintenance. Constitutes the transmembrane long form (L-OPA1) that plays a central role in mitochondrial inner membrane fusion and cristae morphology. L-OPA1 and the soluble short form (S-OPA1) form higher-order helical assemblies that coordinate the fusion of mitochondrial inner membranes. Inner membrane-anchored L-OPA1 molecules initiate membrane remodeling by recruiting soluble S-OPA1 to rapidly polymerize into a flexible cylindrical scaffold encaging the mitochondrial inner membrane. Once at the membrane surface, the formation of S-OPA1 helices induce bilayer curvature. OPA1 dimerization through the paddle region, which inserts into cardiolipin-containing membrane, promotes GTP hydrolysis and the helical assembly of a flexible OPA1 lattice on the membrane, which drives membrane curvature and mitochondrial fusion. Plays a role in the maintenance and remodeling of mitochondrial cristae, some invaginations of the mitochondrial inner membrane that provide an increase in the surface area. Probably acts by forming helical filaments at the inside of inner membrane tubes with the shape and dimensions of crista junctions. The equilibrium between L-OPA1 and S-OPA1 influences cristae shape and morphology: increased L-OPA1 levels promote cristae stacking and elongated mitochondria, while increased S-OPA1 levels correlated with irregular cristae packing and round mitochondria shape. In terms of biological role, constitutes the soluble short form (S-OPA1) generated by cleavage by OMA1, which plays a central role in mitochondrial inner membrane fusion and cristae morphology. The transmembrane long form (L-OPA1) and the S-OPA1 form higher-order helical assemblies that coordinate the fusion of mitochondrial inner membranes. Inner membrane-anchored L-OPA1 molecules initiate membrane remodeling by recruiting soluble S-OPA1 to rapidly polymerize into a flexible cylindrical scaffold encaging the mitochondrial inner membrane. Once at the membrane surface, the formation of S-OPA1 helices induce bilayer curvature. OPA1 dimerization through the paddle region, which inserts into cardiolipin-containing membrane, promotes GTP hydrolysis and the helical assembly of a flexible OPA1 lattice on the membrane, which drives membrane curvature and mitochondrial fusion. Excess levels of S-OPA1 produced by cleavage by OMA1 following stress conditions that induce loss of mitochondrial membrane potential, lead to an impaired equilibrium between L-OPA1 and S-OPA1, thereby inhibiting mitochondrial fusion. Involved in mitochondrial safeguard in response to transient mitochondrial membrane depolarization by mediating flickering: cleavage by OMA1 leads to excess production of S-OPA1, preventing mitochondrial hyperfusion. Plays a role in the maintenance and remodeling of mitochondrial cristae, some invaginations of the mitochondrial inner membrane that provide an increase in the surface area. Probably acts by forming helical filaments at the inside of inner membrane tubes with the shape and dimensions of crista junctions. The equilibrium between L-OPA1 and S-OPA1 influences cristae shape and morphology: increased L-OPA1 levels promote cristae stacking and elongated mitochondria, while increased S-OPA1 levels correlated with irregular cristae packing and round mitochondria shape. Its function is as follows. Coexpression of isoform 1 with shorter alternative products is required for optimal activity in promoting mitochondrial fusion. Functionally, isoforms that contain the alternative exon 4b are required for mitochondrial genome maintenance, possibly by anchoring the mitochondrial nucleoids to the inner mitochondrial membrane. The sequence is that of Dynamin-like GTPase OPA1, mitochondrial from Homo sapiens (Human).